A 418-amino-acid chain; its full sequence is Serine hydroxymethyltransferase (418 aa).

Residues L121 and 125 to 127 (GHL) each bind (6S)-5,6,7,8-tetrahydrofolate. K230 is modified (N6-(pyridoxal phosphate)lysine). 356–358 (SPF) is a binding site for (6S)-5,6,7,8-tetrahydrofolate.

It belongs to the SHMT family. As to quaternary structure, homodimer. It depends on pyridoxal 5'-phosphate as a cofactor.

It localises to the cytoplasm. It catalyses the reaction (6R)-5,10-methylene-5,6,7,8-tetrahydrofolate + glycine + H2O = (6S)-5,6,7,8-tetrahydrofolate + L-serine. Its pathway is one-carbon metabolism; tetrahydrofolate interconversion. It functions in the pathway amino-acid biosynthesis; glycine biosynthesis; glycine from L-serine: step 1/1. Functionally, catalyzes the reversible interconversion of serine and glycine with tetrahydrofolate (THF) serving as the one-carbon carrier. This reaction serves as the major source of one-carbon groups required for the biosynthesis of purines, thymidylate, methionine, and other important biomolecules. Also exhibits THF-independent aldolase activity toward beta-hydroxyamino acids, producing glycine and aldehydes, via a retro-aldol mechanism. In Idiomarina loihiensis (strain ATCC BAA-735 / DSM 15497 / L2-TR), this protein is Serine hydroxymethyltransferase.